We begin with the raw amino-acid sequence, 253 residues long: Ubiquinone biosynthesis O-methyltransferase (253 aa).

S-adenosyl-L-methionine contacts are provided by Arg-45, Gly-76, Asp-97, and Met-140.

The protein belongs to the methyltransferase superfamily. UbiG/COQ3 family.

The catalysed reaction is a 3-demethylubiquinol + S-adenosyl-L-methionine = a ubiquinol + S-adenosyl-L-homocysteine + H(+). The enzyme catalyses a 3-(all-trans-polyprenyl)benzene-1,2-diol + S-adenosyl-L-methionine = a 2-methoxy-6-(all-trans-polyprenyl)phenol + S-adenosyl-L-homocysteine + H(+). It participates in cofactor biosynthesis; ubiquinone biosynthesis. In terms of biological role, O-methyltransferase that catalyzes the 2 O-methylation steps in the ubiquinone biosynthetic pathway. In Parvibaculum lavamentivorans (strain DS-1 / DSM 13023 / NCIMB 13966), this protein is Ubiquinone biosynthesis O-methyltransferase.